Reading from the N-terminus, the 83-residue chain is Exodeoxyribonuclease 7 small subunit (83 aa).

The protein belongs to the XseB family. Heterooligomer composed of large and small subunits.

It localises to the cytoplasm. The catalysed reaction is Exonucleolytic cleavage in either 5'- to 3'- or 3'- to 5'-direction to yield nucleoside 5'-phosphates.. Bidirectionally degrades single-stranded DNA into large acid-insoluble oligonucleotides, which are then degraded further into small acid-soluble oligonucleotides. The protein is Exodeoxyribonuclease 7 small subunit of Mesorhizobium japonicum (strain LMG 29417 / CECT 9101 / MAFF 303099) (Mesorhizobium loti (strain MAFF 303099)).